The primary structure comprises 107 residues: MQFSTTPTLEGQTIVEYCGVVTGEAILGANIFRDFFAGIRDIVGGRSGAYEKELRKAREIAFEELGDQARALGADAVVGIDIDYETVGQNGSMLMVSVSGTAVKTRR.

The protein belongs to the UPF0145 family.

The sequence is that of UPF0145 protein YbjQ from Escherichia coli (strain SMS-3-5 / SECEC).